We begin with the raw amino-acid sequence, 306 residues long: Tyrosine recombinase XerC (306 aa).

The Core-binding (CB) domain maps to 2–81 (AKASAAIEEF…ALRQFYGFLV (80 aa)). In terms of domain architecture, Tyr recombinase spans 102-283 (PLPKTLSHKE…DAARLVALVN (182 aa)). Active-site residues include R146, K170, H235, R238, and H261. Catalysis depends on Y270, which acts as the O-(3'-phospho-DNA)-tyrosine intermediate.

The protein belongs to the 'phage' integrase family. XerC subfamily. In terms of assembly, forms a cyclic heterotetrameric complex composed of two molecules of XerC and two molecules of XerD.

It is found in the cytoplasm. Functionally, site-specific tyrosine recombinase, which acts by catalyzing the cutting and rejoining of the recombining DNA molecules. The XerC-XerD complex is essential to convert dimers of the bacterial chromosome into monomers to permit their segregation at cell division. It also contributes to the segregational stability of plasmids. In Erythrobacter litoralis (strain HTCC2594), this protein is Tyrosine recombinase XerC.